We begin with the raw amino-acid sequence, 95 residues long: Large ribosomal subunit protein uL24c (95 aa).

Belongs to the universal ribosomal protein uL24 family. Part of the 50S ribosomal subunit.

It is found in the plastid. The protein resides in the chloroplast. In terms of biological role, one of two assembly initiator proteins, it binds directly to the 5'-end of the 23S rRNA, where it nucleates assembly of the 50S subunit. The polypeptide is Large ribosomal subunit protein uL24c (rpl24) (Porphyra purpurea (Red seaweed)).